Reading from the N-terminus, the 536-residue chain is MEKRLIIAVVLSIGVLYAYSFIFPTPKPVPTPGGKQAAMSSATAPAPSVAALPIAGTTPVAAPAPQAGQAPAVAKDVTVDTDLYTAVFSTQGGGLKKFVLKKYKETAGPQGKDIVLVNETAANRYALLSDSREFGISPNALYSASTGEVKVTDGGKGSLELTTTTSQGITFRKVYTFSGDAYRIGLTEEVQNVGNVALTGAVHLLQTSRVVDAKKEGRYEVYSPSTLAEGKVKLDDLEDLQKTPVQYGKDIAWSAFADKYFVDGIIADKGSISQVRITRPANDAILRDVASPTVSVAPGQRSAINYAIYYGPKDLDILKLQGSRFEEVIDYGWFGPIAKPLIYSLKFLYKYTGNYGIAIIIITFILKLVFFPLTHKSYKSMKDMQKLQPKMTELKEKFKNDRDAMNRAVMELYKTHKVNPLGGCLPMLVQIPVFFGLYRALMYSIELRHAPFYLWITDLSAKDPYYVTPIIMGATMFIQQKMTPTNMDPVQAKMMLMLPIVFTFMFLNFPSGLVIYWLVNNVLTIAQQMYINKTVE.

Transmembrane regions (helical) follow at residues 5–25 (LIIAVVLSIGVLYAYSFIFPT), 353–373 (GNYGIAIIIITFILKLVFFPL), 418–438 (VNPLGGCLPMLVQIPVFFGLY), and 495–515 (MLMLPIVFTFMFLNFPSGLVI).

It belongs to the OXA1/ALB3/YidC family. Type 1 subfamily. In terms of assembly, interacts with the Sec translocase complex via SecD. Specifically interacts with transmembrane segments of nascent integral membrane proteins during membrane integration.

Its subcellular location is the cell inner membrane. Functionally, required for the insertion and/or proper folding and/or complex formation of integral membrane proteins into the membrane. Involved in integration of membrane proteins that insert both dependently and independently of the Sec translocase complex, as well as at least some lipoproteins. Aids folding of multispanning membrane proteins. The sequence is that of Membrane protein insertase YidC from Geobacter sp. (strain M21).